The following is a 306-amino-acid chain: Olfactory receptor 8G17 (306 aa).

At 1–28 (MEKGNQSTVNKFFLSGLTEQPELQLPLF) the chain is on the extracellular side. A glycan (N-linked (GlcNAc...) asparagine) is linked at N5. A helical membrane pass occupies residues 29 to 49 (LLFLGIYLLTVLGNLGMIILI). Topologically, residues 50 to 56 (LLSSYLH) are cytoplasmic. A helical transmembrane segment spans residues 57–77 (TPMYFFLSSLSFIDFCQSTVI). Residues 78 to 97 (TPKMLVKFVREKNEISYPEC) are Extracellular-facing. A helical transmembrane segment spans residues 98-118 (ITQLCFFVIFAVSESYMLAAM). Residues 119 to 143 (AYDRYVAICSPLLYSSIMSQHKCLS) lie on the Cytoplasmic side of the membrane. A helical transmembrane segment spans residues 144–164 (LVLGVYILGIVCASAHVGCIF). The Extracellular segment spans residues 165 to 196 (RIDFCKSDLINHYFCDLISILNLSCSNIFVND). The chain crosses the membrane as a helical span at residues 197-217 (LVILIFSLINTIFPTLTILSS). Residues 218–236 (YAFIIISILRIKSTEGRSK) lie on the Cytoplasmic side of the membrane. A helical membrane pass occupies residues 237 to 257 (AFSTCSSHISAVAIFYISAGF). The Extracellular portion of the chain corresponds to 258 to 271 (TYLNPSSSHSMDEG). The helical transmembrane segment at 272–292 (KVSSIFYTIIVPMLNPLIYSL) threads the bilayer. The Cytoplasmic portion of the chain corresponds to 293 to 306 (RNKDVKIALKKMIE).

This sequence belongs to the G-protein coupled receptor 1 family.

It is found in the cell membrane. Odorant receptor. This is Olfactory receptor 8G17 from Mus musculus (Mouse).